Reading from the N-terminus, the 418-residue chain is Serine--tRNA ligase (418 aa).

228–230 serves as a coordination point for L-serine; the sequence is TSE. ATP-binding positions include 258-260 and Val274; that span reads RKE. Glu281 serves as a coordination point for L-serine. 345–348 lines the ATP pocket; sequence EVVS. Thr381 contacts L-serine.

Belongs to the class-II aminoacyl-tRNA synthetase family. Type-1 seryl-tRNA synthetase subfamily. Homodimer. The tRNA molecule binds across the dimer.

The protein localises to the cytoplasm. The enzyme catalyses tRNA(Ser) + L-serine + ATP = L-seryl-tRNA(Ser) + AMP + diphosphate + H(+). It carries out the reaction tRNA(Sec) + L-serine + ATP = L-seryl-tRNA(Sec) + AMP + diphosphate + H(+). The protein operates within aminoacyl-tRNA biosynthesis; selenocysteinyl-tRNA(Sec) biosynthesis; L-seryl-tRNA(Sec) from L-serine and tRNA(Sec): step 1/1. Its function is as follows. Catalyzes the attachment of serine to tRNA(Ser). Is also able to aminoacylate tRNA(Sec) with serine, to form the misacylated tRNA L-seryl-tRNA(Sec), which will be further converted into selenocysteinyl-tRNA(Sec). The protein is Serine--tRNA ligase of Cenarchaeum symbiosum (strain A).